The following is a 131-amino-acid chain: MVTLFTSPSCTSCRKAKAWLQEHDIPYTERNIFSEHLTIDEIKQILKMTEDGTDEIISTRSKTYQKLNVDIDALPLQDLYSIIQDNPGLLRRPIILDEKRLQVGYNEDEIRRFLPRKVRTFQLQEAQRMVD.

Cysteine 10 and cysteine 13 form a disulfide bridge.

Belongs to the ArsC family. Spx subfamily. In terms of assembly, interacts with the C-terminal domain of the alpha subunit of the RNAP.

The protein resides in the cytoplasm. Its function is as follows. Global transcriptional regulator that plays a key role in stress response and exerts either positive or negative regulation of genes. Acts by interacting with the C-terminal domain of the alpha subunit of the RNA polymerase (RNAP). This interaction can enhance binding of RNAP to the promoter region of target genes and stimulate their transcription, or block interaction of RNAP with activator. In Staphylococcus saprophyticus subsp. saprophyticus (strain ATCC 15305 / DSM 20229 / NCIMB 8711 / NCTC 7292 / S-41), this protein is Global transcriptional regulator Spx.